We begin with the raw amino-acid sequence, 205 residues long: Recombination protein RecR (205 aa).

The C4-type zinc-finger motif lies at 64–79 (CSRCYFITQGDLCAIC). The 96-residue stretch at 87–182 (RVICVVEEPL…RVTRLARGLP (96 aa)) folds into the Toprim domain.

Belongs to the RecR family.

Its function is as follows. May play a role in DNA repair. It seems to be involved in an RecBC-independent recombinational process of DNA repair. It may act with RecF and RecO. The protein is Recombination protein RecR of Roseiflexus sp. (strain RS-1).